Reading from the N-terminus, the 436-residue chain is Chorismate synthase, chloroplastic (436 aa).

A disordered region spans residues 1 to 24; sequence MASSSLTSKSILGSTKLGSSSLPS. Residues 1 to 50 constitute a chloroplast transit peptide; that stretch reads MASSSLTSKSILGSTKLGSSSLPSELRRLSSPAVQISLRTQTRKNFQIQA.

The protein belongs to the chorismate synthase family. As to quaternary structure, homotetramer. It depends on FMNH2 as a cofactor.

The protein localises to the plastid. It is found in the chloroplast. It catalyses the reaction 5-O-(1-carboxyvinyl)-3-phosphoshikimate = chorismate + phosphate. Its pathway is metabolic intermediate biosynthesis; chorismate biosynthesis; chorismate from D-erythrose 4-phosphate and phosphoenolpyruvate: step 7/7. Catalyzes the last common step of the biosynthesis of aromatic amino acids, produced via the shikimic acid pathway. This Arabidopsis thaliana (Mouse-ear cress) protein is Chorismate synthase, chloroplastic (EMB1144).